The sequence spans 329 residues: Phenylalanine--tRNA ligase alpha subunit (329 aa).

Glu254 serves as a coordination point for Mg(2+).

This sequence belongs to the class-II aminoacyl-tRNA synthetase family. Phe-tRNA synthetase alpha subunit type 1 subfamily. Tetramer of two alpha and two beta subunits. Mg(2+) serves as cofactor.

The protein resides in the cytoplasm. The enzyme catalyses tRNA(Phe) + L-phenylalanine + ATP = L-phenylalanyl-tRNA(Phe) + AMP + diphosphate + H(+). This is Phenylalanine--tRNA ligase alpha subunit from Mannheimia succiniciproducens (strain KCTC 0769BP / MBEL55E).